The chain runs to 440 residues: Thymidine phosphorylase (440 aa).

Belongs to the thymidine/pyrimidine-nucleoside phosphorylase family. As to quaternary structure, homodimer.

The enzyme catalyses thymidine + phosphate = 2-deoxy-alpha-D-ribose 1-phosphate + thymine. It participates in pyrimidine metabolism; dTMP biosynthesis via salvage pathway; dTMP from thymine: step 1/2. The enzymes which catalyze the reversible phosphorolysis of pyrimidine nucleosides are involved in the degradation of these compounds and in their utilization as carbon and energy sources, or in the rescue of pyrimidine bases for nucleotide synthesis. This is Thymidine phosphorylase from Salmonella paratyphi A (strain ATCC 9150 / SARB42).